Consider the following 322-residue polypeptide: Malate dehydrogenase (322 aa).

NAD(+)-binding positions include Gly10–Gly15 and Asp34. Substrate is bound by residues Arg83 and Arg89. NAD(+) is bound by residues Asn96 and Ile119 to Asn121. Asn121 and Arg152 together coordinate substrate. His176 (proton acceptor) is an active-site residue.

It belongs to the LDH/MDH superfamily. MDH type 3 family.

It carries out the reaction (S)-malate + NAD(+) = oxaloacetate + NADH + H(+). Catalyzes the reversible oxidation of malate to oxaloacetate. This chain is Malate dehydrogenase, found in Nitrobacter hamburgensis (strain DSM 10229 / NCIMB 13809 / X14).